Here is a 245-residue protein sequence, read N- to C-terminus: Ribonuclease PH (245 aa).

Phosphate contacts are provided by residues Arg-86 and 124 to 126 (GTR).

Belongs to the RNase PH family. Homohexameric ring arranged as a trimer of dimers.

The catalysed reaction is tRNA(n+1) + phosphate = tRNA(n) + a ribonucleoside 5'-diphosphate. Phosphorolytic 3'-5' exoribonuclease that plays an important role in tRNA 3'-end maturation. Removes nucleotide residues following the 3'-CCA terminus of tRNAs; can also add nucleotides to the ends of RNA molecules by using nucleoside diphosphates as substrates, but this may not be physiologically important. Probably plays a role in initiation of 16S rRNA degradation (leading to ribosome degradation) during starvation. The protein is Ribonuclease PH of Bacillus mycoides (strain KBAB4) (Bacillus weihenstephanensis).